The following is a 395-amino-acid chain: Phosphopentomutase (395 aa).

Residues Asp-10, Asp-294, His-299, Asp-335, His-336, and His-347 each contribute to the Mn(2+) site.

The protein belongs to the phosphopentomutase family. Mn(2+) serves as cofactor.

It is found in the cytoplasm. The enzyme catalyses 2-deoxy-alpha-D-ribose 1-phosphate = 2-deoxy-D-ribose 5-phosphate. The catalysed reaction is alpha-D-ribose 1-phosphate = D-ribose 5-phosphate. It participates in carbohydrate degradation; 2-deoxy-D-ribose 1-phosphate degradation; D-glyceraldehyde 3-phosphate and acetaldehyde from 2-deoxy-alpha-D-ribose 1-phosphate: step 1/2. Its function is as follows. Isomerase that catalyzes the conversion of deoxy-ribose 1-phosphate (dRib-1-P) and ribose 1-phosphate (Rib-1-P) to deoxy-ribose 5-phosphate (dRib-5-P) and ribose 5-phosphate (Rib-5-P), respectively. The polypeptide is Phosphopentomutase (Actinobacillus succinogenes (strain ATCC 55618 / DSM 22257 / CCUG 43843 / 130Z)).